Here is a 254-residue protein sequence, read N- to C-terminus: DNA repair protein RecO (254 aa).

This sequence belongs to the RecO family.

Involved in DNA repair and RecF pathway recombination. The protein is DNA repair protein RecO of Verminephrobacter eiseniae (strain EF01-2).